We begin with the raw amino-acid sequence, 188 residues long: GTP cyclohydrolase 1 (188 aa).

The Zn(2+) site is built by cysteine 78, histidine 81, and cysteine 150.

Belongs to the GTP cyclohydrolase I family. As to quaternary structure, toroid-shaped homodecamer, composed of two pentamers of five dimers.

The catalysed reaction is GTP + H2O = 7,8-dihydroneopterin 3'-triphosphate + formate + H(+). It functions in the pathway cofactor biosynthesis; 7,8-dihydroneopterin triphosphate biosynthesis; 7,8-dihydroneopterin triphosphate from GTP: step 1/1. The chain is GTP cyclohydrolase 1 from Geobacillus kaustophilus (strain HTA426).